The sequence spans 780 residues: E3 UFM1-protein ligase 1 homolog (780 aa).

Polar residues predominate over residues 403 to 413 (STSSTNPNHST). Disordered stretches follow at residues 403 to 458 (STSS…RSHI) and 734 to 760 (SSDK…NIDL). 2 stretches are compositionally biased toward basic and acidic residues: residues 443–458 (KDRS…RSHI) and 736–750 (DKQK…KDSD).

The protein belongs to the UFL1 family.

E3 UFM1-protein ligase that mediates ufmylation of target proteins. The chain is E3 UFM1-protein ligase 1 homolog from Trichoplax adhaerens (Trichoplax reptans).